The primary structure comprises 139 residues: Endoribonuclease YbeY (139 aa).

Residues histidine 110, histidine 114, and histidine 120 each contribute to the Zn(2+) site.

This sequence belongs to the endoribonuclease YbeY family. The cofactor is Zn(2+).

It is found in the cytoplasm. In terms of biological role, single strand-specific metallo-endoribonuclease involved in late-stage 70S ribosome quality control and in maturation of the 3' terminus of the 16S rRNA. The chain is Endoribonuclease YbeY from Thermus thermophilus (strain ATCC BAA-163 / DSM 7039 / HB27).